A 50-amino-acid polypeptide reads, in one-letter code: MSLLNKPKSEMTPEELQKREEEEFNTGPLSVXTQSXKTXTQVLINCRNTK.

The interval 1-36 (MSLLNKPKSEMTPEELQKREEEEFNTGPLSVXTQSX) is disordered. Position 2 is an N-acetylserine (Ser2). Glycyl lysine isopeptide (Lys-Gly) (interchain with G-Cter in SUMO2) cross-links involve residues Lys6 and Lys8. Over residues 7-21 (PKSEMTPEELQKREE) the composition is skewed to basic and acidic residues. Position 9 is a phosphoserine (Ser9). Thr12 carries the phosphothreonine modification.

It belongs to the snRNP core protein family. As to quaternary structure, core component of the spliceosomal U1, U2, U4 and U5 small nuclear ribonucleoproteins (snRNPs), the building blocks of the spliceosome. Most spliceosomal snRNPs contain a common set of Sm proteins, SNRPB, SNRPD1, SNRPD2, SNRPD3, SNRPE, SNRPF and SNRPG that assemble in a heptameric protein ring on the Sm site of the small nuclear RNA to form the core snRNP. Component of the U1 snRNP. The U1 snRNP is composed of the U1 snRNA and the 7 core Sm proteins SNRPB, SNRPD1, SNRPD2, SNRPD3, SNRPE, SNRPF and SNRPG, and at least three U1 snRNP-specific proteins SNRNP70/U1-70K, SNRPA/U1-A and SNRPC/U1-C. Component of the U4/U6-U5 tri-snRNP complex composed of the U4, U6 and U5 snRNAs and at least PRPF3, PRPF4, PRPF6, PRPF8, PRPF31, SNRNP200, TXNL4A, SNRNP40, SNRPB, SNRPD1, SNRPD2, SNRPD3, SNRPE, SNRPF, SNRPG, DDX23, CD2BP2, PPIH, SNU13, EFTUD2, SART1 and USP39, plus LSM2, LSM3, LSM4, LSM5, LSM6, LSM7 and LSM8. Component of the minor spliceosome, which splices U12-type introns. Part of the SMN-Sm complex that contains SMN1, GEMIN2/SIP1, DDX20/GEMIN3, GEMIN4, GEMIN5, GEMIN6, GEMIN7, GEMIN8, STRAP/UNRIP and the Sm proteins SNRPB, SNRPD1, SNRPD2, SNRPD3, SNRPE, SNRPF and SNRPG; catalyzes core snRNPs assembly. Forms a 6S pICln-Sm complex composed of CLNS1A/pICln, SNRPD1, SNRPD2, SNRPE, SNRPF and SNRPG; ring-like structure where CLNS1A/pICln mimics additional Sm proteins and which is unable to assemble into the core snRNP. Interacts with SMN1; the interaction is direct. Interacts with GEMIN2; the interaction is direct. Interacts with SNRPD1; the interaction is direct. Interacts with SNRPF; the interaction is direct.

The protein localises to the cytoplasm. Its subcellular location is the cytosol. It localises to the nucleus. Plays a role in pre-mRNA splicing as a core component of the spliceosomal U1, U2, U4 and U5 small nuclear ribonucleoproteins (snRNPs), the building blocks of the spliceosome. Component of both the pre-catalytic spliceosome B complex and activated spliceosome C complexes. As a component of the minor spliceosome, involved in the splicing of U12-type introns in pre-mRNAs. This is Small nuclear ribonucleoprotein Sm D2 (SNRPD2) from Sus scrofa (Pig).